We begin with the raw amino-acid sequence, 513 residues long: Activin receptor type-2A (513 aa).

Residues 1-19 (MGAAAKLAFAVFLISCSSG) form the signal peptide. Residues 20 to 135 (AILGRSETQE…TSNPVTPKPP (116 aa)) lie on the Extracellular side of the membrane. Intrachain disulfides connect Cys-30/Cys-60, Cys-50/Cys-78, Cys-85/Cys-104, Cys-91/Cys-103, and Cys-105/Cys-110. 2 N-linked (GlcNAc...) asparagine glycosylation sites follow: Asn-43 and Asn-66. A helical membrane pass occupies residues 136-161 (YYNILLYSLVPLMLIAGIVICAFWVY). The Cytoplasmic portion of the chain corresponds to 162–513 (RHHKMAYPPV…VDFPPKESSL (352 aa)). The 294-residue stretch at 192–485 (LQLLEVKARG…GERITQMQRL (294 aa)) folds into the Protein kinase domain. ATP-binding positions include 198-206 (KARGRFGCV) and Lys-219. Asp-322 (proton acceptor) is an active-site residue.

The protein belongs to the protein kinase superfamily. TKL Ser/Thr protein kinase family. TGFB receptor subfamily. In terms of assembly, part of a complex consisting of MAGI2/ARIP1, ACVR2A, ACVR1B and SMAD3. Interacts with MAGI2/ARIP1. Interacts with type I receptor ACVR1. Interacts with BMP7. Interacts with TSC22D1/TSC-22. Interacts with activin A/INHBA. It depends on Mg(2+) as a cofactor. Requires Mn(2+) as cofactor. As to expression, brain, testis, intestine, liver and kidney.

The protein resides in the cell membrane. The catalysed reaction is L-threonyl-[receptor-protein] + ATP = O-phospho-L-threonyl-[receptor-protein] + ADP + H(+). It carries out the reaction L-seryl-[receptor-protein] + ATP = O-phospho-L-seryl-[receptor-protein] + ADP + H(+). Its function is as follows. On ligand binding, forms a receptor complex consisting of two type II and two type I transmembrane serine/threonine kinases. Type II receptors phosphorylate and activate type I receptors which autophosphorylate, then bind and activate SMAD transcriptional regulators. Receptor for activin A, activin B and inhibin A. Mediates induction of adipogenesis by GDF6. This chain is Activin receptor type-2A, found in Mus musculus (Mouse).